Reading from the N-terminus, the 236-residue chain is Small ribosomal subunit protein uS2c (236 aa).

It belongs to the universal ribosomal protein uS2 family.

It is found in the plastid. It localises to the chloroplast. This Coffea arabica (Arabian coffee) protein is Small ribosomal subunit protein uS2c (rps2).